Here is a 298-residue protein sequence, read N- to C-terminus: Release factor glutamine methyltransferase (298 aa).

Residues 131–135 (GTGTG), D162, W189, and N205 contribute to the S-adenosyl-L-methionine site. A substrate-binding site is contributed by 205-208 (NPPY).

It belongs to the protein N5-glutamine methyltransferase family. PrmC subfamily.

The catalysed reaction is L-glutaminyl-[peptide chain release factor] + S-adenosyl-L-methionine = N(5)-methyl-L-glutaminyl-[peptide chain release factor] + S-adenosyl-L-homocysteine + H(+). In terms of biological role, methylates the class 1 translation termination release factors RF1/PrfA and RF2/PrfB on the glutamine residue of the universally conserved GGQ motif. The protein is Release factor glutamine methyltransferase of Pasteurella multocida (strain Pm70).